An 85-amino-acid chain; its full sequence is Large ribosomal subunit protein bL27 (85 aa).

Residues 1-21 (MAHKKAGGSTRNGRDSESKRL) are disordered.

The protein belongs to the bacterial ribosomal protein bL27 family.

The polypeptide is Large ribosomal subunit protein bL27 (Pseudomonas putida (strain W619)).